We begin with the raw amino-acid sequence, 511 residues long: Chromosomal replication initiator protein DnaA (511 aa).

The tract at residues 1–90 (MSVELWQQCV…RRSSAPRAAP (90 aa)) is domain I, interacts with DnaA modulators. Residues 91-174 (NAPVSAAMAA…QVEGALKHTS (84 aa)) form a domain II region. The tract at residues 125-161 (TAEPAQASDMAEASSRDSYDSMADSAPAPVAPGRTEQ) is disordered. Residues 175 to 391 (YLNRTFTFET…GALKRVIAHS (217 aa)) are domain III, AAA+ region. ATP-binding residues include G219, G221, K222, and T223. The segment at 392-511 (HFMGRDITIE…YKNLLRTLTT (120 aa)) is domain IV, binds dsDNA.

This sequence belongs to the DnaA family. As to quaternary structure, oligomerizes as a right-handed, spiral filament on DNA at oriC.

Its subcellular location is the cytoplasm. In terms of biological role, plays an essential role in the initiation and regulation of chromosomal replication. ATP-DnaA binds to the origin of replication (oriC) to initiate formation of the DNA replication initiation complex once per cell cycle. Binds the DnaA box (a 9 base pair repeat at the origin) and separates the double-stranded (ds)DNA. Forms a right-handed helical filament on oriC DNA; dsDNA binds to the exterior of the filament while single-stranded (ss)DNA is stabiized in the filament's interior. The ATP-DnaA-oriC complex binds and stabilizes one strand of the AT-rich DNA unwinding element (DUE), permitting loading of DNA polymerase. After initiation quickly degrades to an ADP-DnaA complex that is not apt for DNA replication. Binds acidic phospholipids. This Pseudomonas putida (strain W619) protein is Chromosomal replication initiator protein DnaA.